The sequence spans 358 residues: Cytoplasmic dynein 2 light intermediate chain 1 (358 aa).

Disordered regions lie at residues 1 to 35 (MPKV…EDAH) and 307 to 358 (ESTR…ALDP). A compositionally biased stretch (acidic residues) spans 24–33 (TDEEEAEEED). Composition is skewed to basic and acidic residues over residues 307–320 (ESTR…DPVK) and 333–349 (RAQK…EQAK).

It belongs to the dynein light intermediate chain family. As to quaternary structure, light intermediate chain of the cytoplasmic dynein complex 2, a multisubunit complex composed at least of eleven different proteins. The cytoplasmic dynein 2 complex consists of two catalytic heavy chains (HCs) and a number of non-catalytic subunits presented by intermediate chains (ICs), light intermediate chains (LICs) and light chains (LCs). Among them, a heavy chain (DYNC2H1), two intermediate chains (DYNC2I2 and DYNC2I1), a light intermediate chain (DYNC2LI1), and a light chain (DYNLT2B) are unique to the dynein-2 complex, but a subset of light chains are also shared by dynein-1 and dynein-2 complexes. Dynein-2 complex is built around two copies of cytoplasmic dynein 2 heavy chain 1 (DYNC2H1). The C-terminal region forms the motor domain, which converts the energy from ATP hydrolysis into movement. Its N-terminal region forms the tail, an extended structure that binds the other subunits and holds the two heavy chains in a homodimer.

Its subcellular location is the cytoplasm. The protein localises to the cell projection. It is found in the cilium. The protein resides in the cytoskeleton. It localises to the cilium basal body. Its subcellular location is the cilium axoneme. The protein localises to the microtubule organizing center. It is found in the centrosome. Acts as one of several non-catalytic accessory components of the cytoplasmic dynein 2 complex (dynein-2 complex), a motor protein complex that drives the movement of cargos along microtubules within cilia and flagella in concert with the intraflagellar transport (IFT) system, facilitating the assembly of these organelles. The polypeptide is Cytoplasmic dynein 2 light intermediate chain 1 (dync2li1) (Danio rerio (Zebrafish)).